Reading from the N-terminus, the 262-residue chain is Cytochrome c oxidase subunit 3 (262 aa).

6 consecutive transmembrane segments (helical) span residues 39–59 (YDIS…YQWW), 83–103 (GMIL…WAFF), 120–140 (MGII…ILLA), 163–183 (GLFF…YEYI), 201–221 (ATGF…VCLL), and 240–260 (AWYW…IYWW).

It belongs to the cytochrome c oxidase subunit 3 family. In terms of assembly, component of the cytochrome c oxidase (complex IV, CIV), a multisubunit enzyme composed of a catalytic core of 3 subunits and several supernumerary subunits. The complex exists as a monomer or a dimer and forms supercomplexes (SCs) in the inner mitochondrial membrane with ubiquinol-cytochrome c oxidoreductase (cytochrome b-c1 complex, complex III, CIII).

It is found in the mitochondrion inner membrane. It carries out the reaction 4 Fe(II)-[cytochrome c] + O2 + 8 H(+)(in) = 4 Fe(III)-[cytochrome c] + 2 H2O + 4 H(+)(out). Its function is as follows. Component of the cytochrome c oxidase, the last enzyme in the mitochondrial electron transport chain which drives oxidative phosphorylation. The respiratory chain contains 3 multisubunit complexes succinate dehydrogenase (complex II, CII), ubiquinol-cytochrome c oxidoreductase (cytochrome b-c1 complex, complex III, CIII) and cytochrome c oxidase (complex IV, CIV), that cooperate to transfer electrons derived from NADH and succinate to molecular oxygen, creating an electrochemical gradient over the inner membrane that drives transmembrane transport and the ATP synthase. Cytochrome c oxidase is the component of the respiratory chain that catalyzes the reduction of oxygen to water. Electrons originating from reduced cytochrome c in the intermembrane space (IMS) are transferred via the dinuclear copper A center (CU(A)) of subunit 2 and heme A of subunit 1 to the active site in subunit 1, a binuclear center (BNC) formed by heme A3 and copper B (CU(B)). The BNC reduces molecular oxygen to 2 water molecules using 4 electrons from cytochrome c in the IMS and 4 protons from the mitochondrial matrix. The protein is Cytochrome c oxidase subunit 3 (mt:CoIII) of Drosophila yakuba (Fruit fly).